The following is a 507-amino-acid chain: Fumarate hydratase, mitochondrial (507 aa).

The transit peptide at 1 to 41 (MYRALRLLARSRRLLRVPSAGAAVSGEATTLPRCAPNVARM) directs the protein to the mitochondrion. 3 positions are modified to N6-acetyllysine; alternate: K58, K63, and K77. N6-succinyllysine; alternate occurs at positions 58, 63, and 77. Position 82 is a phosphothreonine (T82). K112 and K119 each carry N6-acetyllysine; alternate. K112 and K119 each carry N6-succinyllysine; alternate. Residues 142-144 (SGT), 173-176 (HPND), and 183-185 (SSN) each bind substrate. K210 carries the post-translational modification N6-acetyllysine. K220 is subject to N6-acetyllysine; alternate. Position 220 is an N6-succinyllysine; alternate (K220). T231 contributes to the substrate binding site. The active-site Proton donor/acceptor is the H232. T233 is subject to Phosphothreonine. N6-acetyllysine; alternate is present on K289. N6-succinyllysine; alternate is present on K289. S362 is a catalytic residue. Substrate contacts are provided by residues S363 and 368 to 370 (KVN). S363 is subject to Phosphoserine. N6-succinyllysine occurs at positions 464 and 470. At K499 the chain carries N6-acetyllysine.

It belongs to the class-II fumarase/aspartase family. Fumarase subfamily. Homotetramer. Interacts with H2AZ1. Phosphorylation at Thr-233 by PRKDC in response to DNA damage promotes translocation to the nucleus and recruitment to DNA double-strand breaks (DSBs).

It is found in the mitochondrion. The protein resides in the cytoplasm. It localises to the cytosol. Its subcellular location is the nucleus. The protein localises to the chromosome. It carries out the reaction (S)-malate = fumarate + H2O. The protein operates within carbohydrate metabolism; tricarboxylic acid cycle; (S)-malate from fumarate: step 1/1. Catalyzes the reversible stereospecific interconversion of fumarate to L-malate. Experiments in different species have demonstrated that specific isoforms of this protein act in defined pathways and favor one direction over the other. Its function is as follows. Catalyzes the hydration of fumarate to L-malate in the tricarboxylic acid (TCA) cycle to facilitate a transition step in the production of energy in the form of NADH. In terms of biological role, catalyzes the dehydration of L-malate to fumarate. Fumarate metabolism in the cytosol plays a role during urea cycle and arginine metabolism; fumarate being a by-product of the urea cycle and amino-acid catabolism. Also plays a role in DNA repair by promoting non-homologous end-joining (NHEJ). In response to DNA damage and phosphorylation by PRKDC, translocates to the nucleus and accumulates at DNA double-strand breaks (DSBs): acts by catalyzing formation of fumarate, an inhibitor of KDM2B histone demethylase activity, resulting in enhanced dimethylation of histone H3 'Lys-36' (H3K36me2). In Mus musculus (Mouse), this protein is Fumarate hydratase, mitochondrial.